The sequence spans 411 residues: Glutamate dehydrogenase 1, mitochondrial (411 aa).

Residues M1–L18 constitute a mitochondrion transit peptide. K102 is a catalytic residue.

It belongs to the Glu/Leu/Phe/Val dehydrogenases family.

The protein localises to the mitochondrion. It carries out the reaction L-glutamate + NAD(+) + H2O = 2-oxoglutarate + NH4(+) + NADH + H(+). It catalyses the reaction L-glutamate + NADP(+) + H2O = 2-oxoglutarate + NH4(+) + NADPH + H(+). The protein is Glutamate dehydrogenase 1, mitochondrial (GDH1) of Oryza sativa subsp. indica (Rice).